A 161-amino-acid chain; its full sequence is HMG1/2-like protein (161 aa).

Disordered regions lie at residues 1–46 (MKGA…KRAP), 60–91 (FKQK…EKAP), and 113–161 (GESA…DDDE). Composition is skewed to basic and acidic residues over residues 10–27 (AKAD…EKPA) and 77–89 (AGER…ESEK). The segment at residues 42 to 111 (PKRAPSAFFV…EYNKAIAAYN (70 aa)) is a DNA-binding region (HMG box). The span at 114–123 (ESAAAAAPKK) shows a compositional bias: low complexity. Residues 145–161 (NDDDDDEGSDEDEDDDE) show a composition bias toward acidic residues.

Belongs to the HMGB family.

It is found in the nucleus. The chain is HMG1/2-like protein from Triticum aestivum (Wheat).